We begin with the raw amino-acid sequence, 231 residues long: uncharacterized protein (231 aa).

10–34 (VVTGAGSGIGEAIATLLHEEGAKVV) serves as a coordination point for NADP(+). Substrate is bound at residue Ser-140. Tyr-153 (proton acceptor) is an active-site residue.

This sequence belongs to the short-chain dehydrogenases/reductases (SDR) family.

This is an uncharacterized protein from Staphylococcus aureus (strain MW2).